A 341-amino-acid polypeptide reads, in one-letter code: Aspartate carbamoyltransferase catalytic subunit (341 aa).

2 residues coordinate carbamoyl phosphate: Arg89 and Thr90. Lys117 is an L-aspartate binding site. Carbamoyl phosphate contacts are provided by Arg139, His169, and Gln172. The L-aspartate site is built by Arg202 and Arg257. Gly298 and Pro299 together coordinate carbamoyl phosphate.

It belongs to the aspartate/ornithine carbamoyltransferase superfamily. ATCase family. As to quaternary structure, heterododecamer (2C3:3R2) of six catalytic PyrB chains organized as two trimers (C3), and six regulatory PyrI chains organized as three dimers (R2).

The catalysed reaction is carbamoyl phosphate + L-aspartate = N-carbamoyl-L-aspartate + phosphate + H(+). Its pathway is pyrimidine metabolism; UMP biosynthesis via de novo pathway; (S)-dihydroorotate from bicarbonate: step 2/3. In terms of biological role, catalyzes the condensation of carbamoyl phosphate and aspartate to form carbamoyl aspartate and inorganic phosphate, the committed step in the de novo pyrimidine nucleotide biosynthesis pathway. In Paraburkholderia xenovorans (strain LB400), this protein is Aspartate carbamoyltransferase catalytic subunit.